The primary structure comprises 414 residues: 3-oxo-tetronate kinase (414 aa).

ATP is bound by residues S255, 355 to 358, and G398; that span reads GGET.

Belongs to the four-carbon acid sugar kinase family.

It carries out the reaction 3-dehydro-L-erythronate + ATP = 3-dehydro-4-O-phospho-L-erythronate + ADP + H(+). It catalyses the reaction 3-dehydro-D-erythronate + ATP = 3-dehydro-4-O-phospho-D-erythronate + ADP + H(+). In terms of biological role, catalyzes the ATP-dependent phosphorylation of 3-oxo-tetronate to 3-oxo-tetronate 4-phosphate. The protein is 3-oxo-tetronate kinase of Actinobacillus succinogenes (strain ATCC 55618 / DSM 22257 / CCUG 43843 / 130Z).